The sequence spans 314 residues: L-lactate dehydrogenase 2 (314 aa).

NAD(+) is bound by residues V16, D37, K42, Y68, and G82–L83. Substrate is bound by residues Q85, R91, and N123–D126. Residues A121–N123 and S146 each bind NAD(+). D151–R154 contributes to the substrate binding site. Positions 156 and 171 each coordinate beta-D-fructose 1,6-bisphosphate. The active-site Proton acceptor is the H178. Y223 carries the post-translational modification Phosphotyrosine. T232 contacts substrate.

Belongs to the LDH/MDH superfamily. LDH family. Homotetramer.

The protein resides in the cytoplasm. It catalyses the reaction (S)-lactate + NAD(+) = pyruvate + NADH + H(+). The protein operates within fermentation; pyruvate fermentation to lactate; (S)-lactate from pyruvate: step 1/1. With respect to regulation, allosterically activated by fructose 1,6-bisphosphate (FBP). Functionally, catalyzes the conversion of lactate to pyruvate. The sequence is that of L-lactate dehydrogenase 2 from Bacillus cereus (strain ATCC 10987 / NRS 248).